The primary structure comprises 412 residues: NADH-quinone oxidoreductase subunit D (412 aa).

Belongs to the complex I 49 kDa subunit family. As to quaternary structure, NDH-1 is composed of 14 different subunits. Subunits NuoB, C, D, E, F, and G constitute the peripheral sector of the complex.

Its subcellular location is the cell inner membrane. It carries out the reaction a quinone + NADH + 5 H(+)(in) = a quinol + NAD(+) + 4 H(+)(out). Its function is as follows. NDH-1 shuttles electrons from NADH, via FMN and iron-sulfur (Fe-S) centers, to quinones in the respiratory chain. The immediate electron acceptor for the enzyme in this species is believed to be a menaquinone. Couples the redox reaction to proton translocation (for every two electrons transferred, four hydrogen ions are translocated across the cytoplasmic membrane), and thus conserves the redox energy in a proton gradient. This Flavobacterium psychrophilum (strain ATCC 49511 / DSM 21280 / CIP 103535 / JIP02/86) protein is NADH-quinone oxidoreductase subunit D.